Reading from the N-terminus, the 666-residue chain is tRNA 5-methylaminomethyl-2-thiouridine biosynthesis bifunctional protein MnmC (666 aa).

Residues 1–245 (MKQYAIQPAT…KREMLCGVME (245 aa)) are tRNA (mnm(5)s(2)U34)-methyltransferase. An FAD-dependent cmnm(5)s(2)U34 oxidoreductase region spans residues 270–666 (IGGGIASALL…RKLLKGKAVK (397 aa)).

In the N-terminal section; belongs to the methyltransferase superfamily. tRNA (mnm(5)s(2)U34)-methyltransferase family. This sequence in the C-terminal section; belongs to the DAO family. FAD is required as a cofactor.

The protein resides in the cytoplasm. The enzyme catalyses 5-aminomethyl-2-thiouridine(34) in tRNA + S-adenosyl-L-methionine = 5-methylaminomethyl-2-thiouridine(34) in tRNA + S-adenosyl-L-homocysteine + H(+). In terms of biological role, catalyzes the last two steps in the biosynthesis of 5-methylaminomethyl-2-thiouridine (mnm(5)s(2)U) at the wobble position (U34) in tRNA. Catalyzes the FAD-dependent demodification of cmnm(5)s(2)U34 to nm(5)s(2)U34, followed by the transfer of a methyl group from S-adenosyl-L-methionine to nm(5)s(2)U34, to form mnm(5)s(2)U34. The sequence is that of tRNA 5-methylaminomethyl-2-thiouridine biosynthesis bifunctional protein MnmC from Salmonella typhi.